An 839-amino-acid chain; its full sequence is Probable beta-glucosidase I (839 aa).

The N-linked (GlcNAc...) asparagine glycan is linked to asparagine 197. Aspartate 225 is a catalytic residue. Residues 395–555 (DGKTGFSFKV…GQEELISNAV (161 aa)) enclose the PA14 domain. An N-linked (GlcNAc...) asparagine glycan is attached at asparagine 620.

Belongs to the glycosyl hydrolase 3 family.

The protein localises to the secreted. It carries out the reaction Hydrolysis of terminal, non-reducing beta-D-glucosyl residues with release of beta-D-glucose.. It functions in the pathway glycan metabolism; cellulose degradation. In terms of biological role, beta-glucosidases are one of a number of cellulolytic enzymes involved in the degradation of cellulosic biomass. Catalyzes the last step releasing glucose from the inhibitory cellobiose. In Aspergillus oryzae (strain ATCC 42149 / RIB 40) (Yellow koji mold), this protein is Probable beta-glucosidase I (bglI).